Reading from the N-terminus, the 86-residue chain is Mu-theraphotoxin-Cg2a 1 (86 aa).

The signal sequence occupies residues 1 to 21 (MKVSVVITLAVLGIMFVWASA). The propeptide occupies 22-50 (AELEERGSDQRDSPAWLKSMERIFQSEER). Disulfide bonds link cysteine 52–cysteine 66, cysteine 59–cysteine 71, and cysteine 65–cysteine 78. Phenylalanine 84 is subject to Phenylalanine amide.

Belongs to the neurotoxin 10 (Hwtx-1) family. 37 (Jztx-31) subfamily. In terms of tissue distribution, expressed by the venom gland.

The protein resides in the secreted. Its function is as follows. Inhibits both peak current and fast inactivation of voltage-gated sodium channels (Nav) channels. Inhibits the inactivation of Nav on DRG neurons (EC(50)=1.77 uM) and peak current of cardiac myocytes (IC(50)=0.90 uM). In Chilobrachys guangxiensis (Chinese earth tiger tarantula), this protein is Mu-theraphotoxin-Cg2a 1.